The chain runs to 130 residues: MFPGRMNPKMMRQMQKMMSDMGMDSKDIKVLKITMELEDKIMVFEKPKVQVMDVMGNKTYTITGRAKNIKKDDIKAEQKEQIKDEEVKLDITKEDIEMVVNQCEVSEEEAKKVLEECNGDIAEAILKLSQ.

The 68-residue stretch at 8–75 (PKMMRQMQKM…AKNIKKDDIK (68 aa)) folds into the NAC-A/B domain.

This sequence belongs to the NAC-alpha family. As to quaternary structure, homodimer. Interacts with the ribosome. Binds ribosomal RNA.

Its function is as follows. Contacts the emerging nascent chain on the ribosome. In Methanococcus aeolicus (strain ATCC BAA-1280 / DSM 17508 / OCM 812 / Nankai-3), this protein is Nascent polypeptide-associated complex protein.